Consider the following 341-residue polypeptide: N-acetyl-gamma-glutamyl-phosphate reductase (341 aa).

C163 is a catalytic residue.

This sequence belongs to the NAGSA dehydrogenase family. Type 1 subfamily.

It is found in the cytoplasm. It carries out the reaction N-acetyl-L-glutamate 5-semialdehyde + phosphate + NADP(+) = N-acetyl-L-glutamyl 5-phosphate + NADPH + H(+). The protein operates within amino-acid biosynthesis; L-arginine biosynthesis; N(2)-acetyl-L-ornithine from L-glutamate: step 3/4. Its function is as follows. Catalyzes the NADPH-dependent reduction of N-acetyl-5-glutamyl phosphate to yield N-acetyl-L-glutamate 5-semialdehyde. The chain is N-acetyl-gamma-glutamyl-phosphate reductase from Idiomarina loihiensis (strain ATCC BAA-735 / DSM 15497 / L2-TR).